The sequence spans 185 residues: Elongation factor P (185 aa).

The protein belongs to the elongation factor P family.

Its subcellular location is the cytoplasm. It functions in the pathway protein biosynthesis; polypeptide chain elongation. Functionally, involved in peptide bond synthesis. Stimulates efficient translation and peptide-bond synthesis on native or reconstituted 70S ribosomes in vitro. Probably functions indirectly by altering the affinity of the ribosome for aminoacyl-tRNA, thus increasing their reactivity as acceptors for peptidyl transferase. The polypeptide is Elongation factor P (Clostridium botulinum (strain ATCC 19397 / Type A)).